The chain runs to 646 residues: Replication protein E1 (646 aa).

A Nuclear localization signal motif is present at residues Lys83–Lys85. A phosphoserine; by host mark is found at Ser89, Ser93, and Ser107. The Nuclear export signal motif lies at Ile106–Leu115. Residues Glu145–Glu185 are disordered. Residues His163 to Glu185 show a composition bias toward basic and acidic residues. A DNA-binding region region spans residues Glu184 to Asp350. The SF3 helicase domain maps to Ile449–Val599. Gly475–Ser482 provides a ligand contact to ATP. A Glycyl lysine isopeptide (Lys-Gly) (interchain with G-Cter in SUMO) cross-link involves residue Lys556.

The protein belongs to the papillomaviridae E1 protein family. Can form hexamers. Interacts with E2 protein; this interaction increases E1 DNA binding specificity. Interacts with host DNA polymerase subunit POLA2. Interacts with host single stranded DNA-binding protein RPA1. Interacts with host TOP1; this interaction stimulates the enzymatic activity of TOP1. In terms of processing, phosphorylated. Sumoylated.

Its subcellular location is the host nucleus. The enzyme catalyses Couples ATP hydrolysis with the unwinding of duplex DNA by translocating in the 3'-5' direction.. The catalysed reaction is ATP + H2O = ADP + phosphate + H(+). Its function is as follows. ATP-dependent DNA 3'-5' helicase required for initiation of viral DNA replication. It forms a complex with the viral E2 protein. The E1-E2 complex binds to the replication origin which contains binding sites for both proteins. During the initial step, a dimer of E1 interacts with a dimer of protein E2 leading to a complex that binds the viral origin of replication with high specificity. Then, a second dimer of E1 displaces the E2 dimer in an ATP-dependent manner to form the E1 tetramer. Following this, two E1 monomers are added to each half of the site, which results in the formation of two E1 trimers on the viral ori. Subsequently, two hexamers will be created. The double hexamer acts as a bi-directional helicase machinery and unwinds the viral DNA and then recruits the host DNA polymerase to start replication. The polypeptide is Replication protein E1 (Homo sapiens (Human)).